The primary structure comprises 443 residues: Xaa-Pro dipeptidase (443 aa).

Mn(2+)-binding residues include aspartate 248, aspartate 259, histidine 339, glutamate 384, and glutamate 423.

The protein belongs to the peptidase M24B family. Bacterial-type prolidase subfamily. Requires Mn(2+) as cofactor.

The catalysed reaction is Xaa-L-Pro dipeptide + H2O = an L-alpha-amino acid + L-proline. In terms of biological role, splits dipeptides with a prolyl residue in the C-terminal position. This is Xaa-Pro dipeptidase from Colwellia psychrerythraea (strain 34H / ATCC BAA-681) (Vibrio psychroerythus).